The following is a 578-amino-acid chain: Putative diflavin flavoprotein A 2 (578 aa).

The zinc metallo-hydrolase stretch occupies residues 48–240; sequence RHGTTYNSFL…LQVVLVATGH (193 aa). Fe cation-binding residues include H97, E99, D101, H164, D183, and H240. The Flavodoxin-like domain occupies 269–406; sequence VALFYVDGYG…LCREAGTDLG (138 aa). Residues 429-578 form a flavodoxin-reductase-like region; sequence IGRLSTGLYI…THHRKLGNHY (150 aa).

This sequence in the N-terminal section; belongs to the zinc metallo-hydrolase group 3 family. In the C-terminal section; belongs to the flavodoxin reductase family. Fe cation is required as a cofactor.

Its function is as follows. Mediates electron transfer from NADH to oxygen, reducing it to water. This modular protein has 3 redox cofactors, in other organisms the same activity requires 2 or 3 proteins. The chain is Putative diflavin flavoprotein A 2 (dfa2) from Synechocystis sp. (strain ATCC 27184 / PCC 6803 / Kazusa).